A 1107-amino-acid polypeptide reads, in one-letter code: Membrane-associated guanylate kinase, WW and PDZ domain-containing protein 3 (1107 aa).

The 86-residue stretch at 17–102 (ECGLSGVGGD…PIRLKTVKPG (86 aa)) folds into the PDZ 1 domain. The Guanylate kinase-like domain maps to 110-284 (RHYLSLQFQK…SMDFRNYLTR (175 aa)). 117 to 124 (FQKGSIDH) serves as a coordination point for ATP. Positions 210–277 (FDTETQRKRT…SYNQTNSSMD (68 aa)) are disordered. Over residues 220–231 (TSVSKMQRTDSS) the composition is skewed to polar residues. Residues 232-241 (LPEEEDEEER) are compositionally biased toward acidic residues. Basic and acidic residues predominate over residues 251–261 (TDHRDRQEPSE). Polar residues predominate over residues 267–277 (PSYNQTNSSMD). 2 WW domains span residues 289-322 (EPLPKNWEMAYTEAGMIYFIDHNTKTTTWLDPRL) and 335-368 (GELPYGWEKIEDPQYGTYYVDHINQKTQFDNPVL). The tract at residues 374-398 (KQLNPAPSEGTVHQEPENSQFTRDP) is disordered. PDZ domains lie at 407–489 (HTSL…TLCR), 577–653 (TIPL…LILR), 727–809 (DVFL…TVRR), and 853–940 (DVIL…IAEE). A disordered region spans residues 941–975 (EHRGPPSGSNSARQSPAPQHRPMGQTQPTYGTLDR). The span at 947–957 (SGSNSARQSPA) shows a compositional bias: polar residues. The 83-residue stretch at 1003–1085 (PVELERGPRG…KVLLLLRPGT (83 aa)) folds into the PDZ 6 domain.

Belongs to the MAGUK family.

The protein localises to the cell membrane. Its subcellular location is the cell junction. The protein resides in the tight junction. Acts as a scaffolding protein at cell-cell junctions, thereby regulating various cellular and signaling processes. This is Membrane-associated guanylate kinase, WW and PDZ domain-containing protein 3 (magi3) from Xenopus tropicalis (Western clawed frog).